A 360-amino-acid chain; its full sequence is Aminomethyltransferase (360 aa).

It belongs to the GcvT family. The glycine cleavage system is composed of four proteins: P, T, L and H.

The enzyme catalyses N(6)-[(R)-S(8)-aminomethyldihydrolipoyl]-L-lysyl-[protein] + (6S)-5,6,7,8-tetrahydrofolate = N(6)-[(R)-dihydrolipoyl]-L-lysyl-[protein] + (6R)-5,10-methylene-5,6,7,8-tetrahydrofolate + NH4(+). Its function is as follows. The glycine cleavage system catalyzes the degradation of glycine. The polypeptide is Aminomethyltransferase (Bdellovibrio bacteriovorus (strain ATCC 15356 / DSM 50701 / NCIMB 9529 / HD100)).